A 486-amino-acid polypeptide reads, in one-letter code: Probable glycine dehydrogenase (decarboxylating) subunit 2 (486 aa).

A disordered region spans residues 1–26 (MLIFESSRPGRQARAQAPKPTAATND). Position 264 is an N6-(pyridoxal phosphate)lysine (Lys264).

This sequence belongs to the GcvP family. C-terminal subunit subfamily. The glycine cleavage system is composed of four proteins: P, T, L and H. In this organism, the P 'protein' is a heterodimer of two subunits. Pyridoxal 5'-phosphate is required as a cofactor.

It carries out the reaction N(6)-[(R)-lipoyl]-L-lysyl-[glycine-cleavage complex H protein] + glycine + H(+) = N(6)-[(R)-S(8)-aminomethyldihydrolipoyl]-L-lysyl-[glycine-cleavage complex H protein] + CO2. In terms of biological role, the glycine cleavage system catalyzes the degradation of glycine. The P protein binds the alpha-amino group of glycine through its pyridoxal phosphate cofactor; CO(2) is released and the remaining methylamine moiety is then transferred to the lipoamide cofactor of the H protein. The sequence is that of Probable glycine dehydrogenase (decarboxylating) subunit 2 from Nitrosococcus oceani (strain ATCC 19707 / BCRC 17464 / JCM 30415 / NCIMB 11848 / C-107).